A 243-amino-acid polypeptide reads, in one-letter code: Juxtaposed with another zinc finger protein 1 (243 aa).

A C2H2-type 1 zinc finger spans residues 12–37 (NTCRFGGCGLHFPTLADLIEHIEDNH). A required for interaction with NR2C2 region spans residues 39–79 (DTDPRVLEKQELQQPTYVALSYINRFMTDAARREQESLKKK). The segment covering 89–108 (SSSVSRGNVSTPPRHSSGSL) has biased composition (polar residues). The interval 89 to 151 (SSSVSRGNVS…SDSDESWTTE (63 aa)) is disordered. Phosphothreonine is present on residues threonine 109 and threonine 113. Positions 118–130 (PSSSFRSSTPTGS) are enriched in low complexity. Over residues 131–148 (EYDEEEVDYEESDSDESW) the composition is skewed to acidic residues. The segment at 173 to 198 (FACPVPGCKKRYKNVNGIKYHAKNGH) adopts a C2H2-type 2 zinc-finger fold. A C2H2-type 3; degenerate zinc finger spans residues 208–230 (FKCRCGKSYKTAQGLRHHTINFH).

Interacts with NR2C2 (via ligand-binding region). Expressed in range of tissues with highest expression levels in testis, liver, muscle and fat and lowest levels in kidney. Detected in liver and white adipose tissue (at protein level).

The protein localises to the nucleus. Acts as a transcriptional corepressor of orphan nuclear receptor NR2C2. Inhibits expression of the gluconeogenesis enzyme PCK2 through inhibition of NR2C2 activity. Also involved in transcriptional activation of NAMPT by promoting expression of PPARA and PPARD. Plays a role in lipid metabolism by suppressing lipogenesis, increasing lipolysis and decreasing lipid accumulation in adipose tissue. Plays a role in glucose homeostasis by improving glucose metabolism and insulin sensitivity. The polypeptide is Juxtaposed with another zinc finger protein 1 (Jazf1) (Mus musculus (Mouse)).